The sequence spans 2112 residues: Phenolphthiocerol synthesis polyketide synthase type I Pks15/1 (2112 aa).

Positions 46-469 (TEPVAVVGIG…GTNAHLILEE (424 aa)) constitute a Ketosynthase family 3 (KS3) domain. Residues Cys216, His351, and His391 each act as for beta-ketoacyl synthase activity in the active site. The interval 579-893 (TVVVFPGQGA…GQVFTTGVPV (315 aa)) is acyltransferase. Ser670 functions as the For acyltransferase activity in the catalytic mechanism. The N-terminal hotdog fold stretch occupies residues 941–1063 (HALLGAVVER…GMLGVAAAET (123 aa)). The dehydratase stretch occupies residues 941 to 1101 (HALLGAVVER…YAYGPAFQGL (161 aa)). Residues 941 to 1215 (HALLGAVVER…TRPITAEQLR (275 aa)) form the PKS/mFAS DH domain. His973 acts as the Proton acceptor; for dehydratase activity in catalysis. Residues 1075-1215 (AESVDISDGY…TRPITAEQLR (141 aa)) are C-terminal hotdog fold. Asp1136 acts as the Proton donor; for dehydratase activity in catalysis. Residues 1406-1711 (GTLEDLVIQP…QARHIGKVVL (306 aa)) are enoylreductase. NADP(+) is bound by residues 1536 to 1553 (VLIH…VQLA) and 1725 to 1740 (TVVI…GVLA). Positions 1724–1905 (GTVVITGATG…SLAWGLWEQP (182 aa)) are beta-ketoacyl reductase. In terms of domain architecture, Carrier spans 2010-2085 (ELLVGLVCLQ…AVAEYVAQQM (76 aa)). Ser2045 bears the O-(pantetheine 4'-phosphoryl)serine mark. The span at 2084–2100 (QMSGSRPTESGDPTSQV) shows a compositional bias: polar residues. The tract at residues 2084–2112 (QMSGSRPTESGDPTSQVVEPAAAEVSVHA) is disordered.

Belongs to the thiolase-like superfamily. Beta-ketoacyl-ACP synthases family. The cofactor is pantetheine 4'-phosphate.

The enzyme catalyses a fatty acyl-[ACP] + malonyl-[ACP] + H(+) = a 3-oxoacyl-[ACP] + holo-[ACP] + CO2. It participates in lipid metabolism; fatty acid biosynthesis. In terms of biological role, catalyzes the elongation by iterative transfer of p-hydroxybenzoyl group from FadD22 (pHBA-S-FAdD22) to form p-hydroxyphenylalkanoate (pHPA) intermediates during phenolphthiocerol (PPOL) biosynthesis. PPOL is an important intermediate in the biosynthesis of phenolic glycolipid (mycosid B). This Mycobacterium bovis (strain ATCC BAA-935 / AF2122/97) protein is Phenolphthiocerol synthesis polyketide synthase type I Pks15/1 (pks15/1).